The primary structure comprises 428 residues: Serine--tRNA ligase (428 aa).

Thr235–Glu237 contacts L-serine. Arg266–Glu268 provides a ligand contact to ATP. Residue Glu289 coordinates L-serine. Glu353–Ser356 provides a ligand contact to ATP. Ser389 serves as a coordination point for L-serine.

It belongs to the class-II aminoacyl-tRNA synthetase family. Type-1 seryl-tRNA synthetase subfamily. As to quaternary structure, homodimer. The tRNA molecule binds across the dimer.

It localises to the cytoplasm. It catalyses the reaction tRNA(Ser) + L-serine + ATP = L-seryl-tRNA(Ser) + AMP + diphosphate + H(+). It carries out the reaction tRNA(Sec) + L-serine + ATP = L-seryl-tRNA(Sec) + AMP + diphosphate + H(+). The protein operates within aminoacyl-tRNA biosynthesis; selenocysteinyl-tRNA(Sec) biosynthesis; L-seryl-tRNA(Sec) from L-serine and tRNA(Sec): step 1/1. Functionally, catalyzes the attachment of serine to tRNA(Ser). Is also able to aminoacylate tRNA(Sec) with serine, to form the misacylated tRNA L-seryl-tRNA(Sec), which will be further converted into selenocysteinyl-tRNA(Sec). The protein is Serine--tRNA ligase of Shewanella baltica (strain OS155 / ATCC BAA-1091).